The following is a 217-amino-acid chain: Adenylate kinase (217 aa).

Residue 10–15 (GSGKGT) coordinates ATP. Residues 30–59 (STGDLLRAAVAAGSELGKQAKAAMDAGELV) are NMP. Residues Thr-31, Arg-36, 57–59 (ELV), 85–88 (GFPR), and Gln-92 each bind AMP. The LID stretch occupies residues 126 to 164 (GRRTCQACGAIYNIYFSPPEVDHRCDKCNSDQLVQRSDD). Position 127 (Arg-127) interacts with ATP. Residues Cys-130 and Cys-133 each contribute to the Zn(2+) site. Residue 136-137 (IY) coordinates ATP. Positions 150 and 153 each coordinate Zn(2+). Residues Arg-161 and Arg-172 each contribute to the AMP site. Asp-200 contributes to the ATP binding site.

This sequence belongs to the adenylate kinase family. As to quaternary structure, monomer.

It localises to the cytoplasm. It catalyses the reaction AMP + ATP = 2 ADP. The protein operates within purine metabolism; AMP biosynthesis via salvage pathway; AMP from ADP: step 1/1. In terms of biological role, catalyzes the reversible transfer of the terminal phosphate group between ATP and AMP. Plays an important role in cellular energy homeostasis and in adenine nucleotide metabolism. The polypeptide is Adenylate kinase (Nitrosococcus oceani (strain ATCC 19707 / BCRC 17464 / JCM 30415 / NCIMB 11848 / C-107)).